The following is a 120-amino-acid chain: Large ribosomal subunit protein uL22 (120 aa).

The protein belongs to the universal ribosomal protein uL22 family. As to quaternary structure, part of the 50S ribosomal subunit.

Its function is as follows. This protein binds specifically to 23S rRNA; its binding is stimulated by other ribosomal proteins, e.g. L4, L17, and L20. It is important during the early stages of 50S assembly. It makes multiple contacts with different domains of the 23S rRNA in the assembled 50S subunit and ribosome. Functionally, the globular domain of the protein is located near the polypeptide exit tunnel on the outside of the subunit, while an extended beta-hairpin is found that lines the wall of the exit tunnel in the center of the 70S ribosome. The sequence is that of Large ribosomal subunit protein uL22 from Rippkaea orientalis (strain PCC 8801 / RF-1) (Cyanothece sp. (strain PCC 8801)).